The primary structure comprises 259 residues: NADP-dependent 3-hydroxy acid dehydrogenase (259 aa).

I11 provides a ligand contact to NADP(+). A Phosphoserine modification is found at S42. T43 carries the phosphothreonine modification. D65, N92, R126, Y158, K162, and V191 together coordinate NADP(+). Y158 functions as the Proton acceptor in the catalytic mechanism. The active-site Lowers pKa of active site Tyr is the K162.

Belongs to the short-chain dehydrogenases/reductases (SDR) family. Homotetramer.

It localises to the cytoplasm. The protein resides in the nucleus. It carries out the reaction L-allo-threonine + NADP(+) = aminoacetone + CO2 + NADPH. In terms of biological role, NADP-dependent dehydrogenase with broad substrate specificity acting on 3-hydroxy acids. Catalyzes the NADP-dependent oxidation of L-allo-threonine to L-2-amino-3-keto-butyrate, which is spontaneously decarboxylated into aminoacetone. Also acts on D-threonine, L-serine, D-serine, D-3-hydroxyisobutyrate, L-3-hydroxyisobutyrate, D-glycerate and L-glycerate. In Schizosaccharomyces pombe (strain 972 / ATCC 24843) (Fission yeast), this protein is NADP-dependent 3-hydroxy acid dehydrogenase.